Consider the following 644-residue polypeptide: MNVSIEGQMLEVASGASCGDALKGALSGKKFKNVLACRLDGGLVDITATVPDGTTTIEPVYADSPEGLDLIRHSTAHIMACAVKRLFPAAKVTIGPSIDNGFYYDFDAERPFSPEDFEAIEREMQKIVDAATPFERSEMPRDEAVALFEGMGETYKVEIIRDLPNDTVSLYRCGEFVDLCRGPHIPHAGFAKAFKLMSVAGAYWRGDEKNPMLSRIYGTAFADAKTLKEHLHRIEEAKRRDHRKLGQQLDLFAFHEDVAPGMVFWHPKGMLVRTIIEDFLRKEHLKRRYDIVQGPQLLRRELWEKSGHYDNYRENMYFTEIDENAYGVKPMNCLAHMLIYRSAIRSYRDLPKRFFELGVVHRHEKSGVLHGLLRVRQFTQDDAHIICRPDQLEDEIIDVIALVRDLMNLFGFDYKVAVSTRPEKSIGSDEAWELATNALVKAVERAGIPYTINEGDGAFYGPKIDVRLMDCIGREWQCSTIQCDFTLPERFDLVYVGQDGERHRPVMVHRAILGSLERFIGVLIEQYAGAFPAWLAPVQARLLTVTDAQNEFVESARAALAKAGIRVEADVRNEKLGYKVREAQLEKIPYILVVGDKEVEAGGVNVRLRTGENLGLKSLDEVVSLLESDCQEPFKRGGMSYSFS.

The TGS domain occupies 1–61; sequence MNVSIEGQML…DGTTTIEPVY (61 aa). Residues 241-532 form a catalytic region; it reads DHRKLGQQLD…LIEQYAGAFP (292 aa). Residues C333, H384, and H509 each coordinate Zn(2+).

Belongs to the class-II aminoacyl-tRNA synthetase family. As to quaternary structure, homodimer. Zn(2+) serves as cofactor.

Its subcellular location is the cytoplasm. The enzyme catalyses tRNA(Thr) + L-threonine + ATP = L-threonyl-tRNA(Thr) + AMP + diphosphate + H(+). Functionally, catalyzes the attachment of threonine to tRNA(Thr) in a two-step reaction: L-threonine is first activated by ATP to form Thr-AMP and then transferred to the acceptor end of tRNA(Thr). Also edits incorrectly charged L-seryl-tRNA(Thr). In Nitratidesulfovibrio vulgaris (strain ATCC 29579 / DSM 644 / CCUG 34227 / NCIMB 8303 / VKM B-1760 / Hildenborough) (Desulfovibrio vulgaris), this protein is Threonine--tRNA ligase.